The sequence spans 303 residues: Cysteine synthase B (303 aa).

At K41 the chain carries N6-(pyridoxal phosphate)lysine. Pyridoxal 5'-phosphate-binding positions include N71, 174–178, and S255; that span reads GTTGT.

Belongs to the cysteine synthase/cystathionine beta-synthase family. As to quaternary structure, homodimer. The cofactor is pyridoxal 5'-phosphate.

The catalysed reaction is O-acetyl-L-serine + hydrogen sulfide = L-cysteine + acetate. Its pathway is amino-acid biosynthesis; L-cysteine biosynthesis; L-cysteine from L-serine: step 2/2. Functionally, two cysteine synthase enzymes are found. Both catalyze the same reaction. Cysteine synthase B can also use thiosulfate in place of sulfide to give cysteine thiosulfonate as a product. The protein is Cysteine synthase B (cysM) of Escherichia coli (strain K12).